We begin with the raw amino-acid sequence, 3242 residues long: tRNA nuclease CdiA (3242 aa).

The first 32 residues, Met-1–Ala-32, serve as a signal peptide directing secretion. Positions Pro-36 to Thr-322 are two-partner system transport domain (TPS). The segment at Gly-351 to Asn-1376 is FHA-1. Residues Gln-1377 to Trp-1668 form a receptor-binding domain (RBD) region. A YP domain region spans residues Trp-1668 to Asn-1852. A periplasmic FHA-1 repeat (pFR) region spans residues Gly-1853–Asn-1913. The segment at Asp-2021–Ser-2631 is FHA-2. Over residues Arg-2075 to His-2091 the composition is skewed to basic and acidic residues. 3 disordered regions span residues Arg-2075–Val-2094, Gly-2310–Gly-2333, and Thr-2439–Asn-2481. Residues Gly-2322–Gly-2333 are compositionally biased toward polar residues. Residues Gly-2969 to Ile-3242 are DUF638-CT domain; not toxic when added to the outside of E.coli, does not interfere with F-pilus mediated conjugation, toxic when expressed intracellularly. Residues Pro-2972–Val-3015 are pre-toxin (PT) domain. Residues Val-3016–Asn-3019 carry the VENN CT cleavage motif motif. A toxin import domain; sufficient to import the tRNA nuclease domain of colicin E5 into E.coli, may bind F-pili region spans residues Val-3016–Tyr-3097. A CT domain; toxic when added to the outside of E.coli and when expressed intracellularly region spans residues Val-3016 to Ile-3242. Positions Ala-3020–Glu-3141 are inner membrane translocation domain (IMTD), targets protein to FtsH. The segment at Ala-3020–Ile-3242 is C-terminal effector domain (CT). The tract at residues Gly-3098–Ile-3242 is tRNase function, does not interfere with F-pilus mediated conjugation. The segment at Lys-3116–Lys-3146 is disordered. The span at Asn-3134–Lys-3146 shows a compositional bias: basic and acidic residues. Residues Lys-3137 to Lys-3238 are a coiled coil. Residues Asp-3170, His-3193, and Glu-3196 contribute to the active site.

This sequence in the N-terminal section; belongs to the CdiA toxin family. As to quaternary structure, the C-terminal (CT) domain interacts with cognate CdiI but not non-cognate CdiI from D.dadantii strain 3937. CdiA-CT also interacts with CysK; this is blocked upon preincubation with O-acetyl-L-serine. CysK forms a complex with CdiA-CT/CdiI. One CdiA toxin subunit binds to each subunit of the CysK homodimer, and one CdiI immunity protein binds to each toxin subunit; the immune complex is thus a dimer of trimers. The 4 C-terminal residues of CdiA fit into the active site of CysK. A divalent metal cation serves as cofactor.

Its subcellular location is the secreted. It is found in the target cell membrane. It localises to the target cell. The protein resides in the target cell cytoplasm. Functionally, toxic component of a toxin-immunity protein module, which functions as a cellular contact-dependent growth inhibition (CDI) system. CDI modules allow bacteria to communicate with and inhibit the growth of closely related neighboring bacteria in a contact-dependent fashion (target cell counts decrease 100- to 1000-fold). CdiA toxicity is neutralized by its cognate immunity protein CdiI, but not by CdiI from other bacteria. Uses heterotrimeric OmpC and OmpF as target cell outer membrane receptors; receptor function depends on polymorphisms in extracellular loops L4 and L5 of OmpC; interacts with itself and closely related bacteria but also with OmpC from E.cloacae ATCC 13047. Its ability to preferentially bind to 'self' receptors suggests it may also play a role in self-recognition and kin selection. A bamA mutation that decreases its expression about 5-fold is partially resistant to this strain of CdiA, probably due to decreased outer membrane receptor protein assembly. Isolated CdiA-CT is imported in an F-pilus-mediated fashion; CdiA-CT inhibits F-mediated conjugation, probably via its N-terminus (residues 3016-3097), although it is not clear if this is physiologically significant. Gains access to the cytoplasm of target cells by using integral inner membrane protein FtsH. The C-terminal domain (CT) cleaves within tRNA anticodon loops; this activity is inhibited by cognate CdiI. tRNase activity of CdiA-CT is stimulated by CysK, although the extreme C-terminus (residues 3098-3242) has tRNase activity in the absence of CysK. In vivo CDI toxicity requires CysK. CysK stabilizes CdiA-CT, allowing it to bind tRNA substrate; neither CdiA-CT nor CysK bind tRNA alone in vitro. Purified CdiA-CT (residues 3016-3242) inhibits E.coli cell growth when added to cultures alone or in complex with cognate CdiI, growth is inhibited when cognate CdiI is present within the cell but not when a CdiA-CT/CdiI complex is added extracellularly, suggesting CdiA-CT alone but not the CdiA-CT/CdiI complex is imported into the target cell. The CdiA protein is thought to be exported from the cell through the central lumen of CdiB, the other half of its two-partner system (TPS). The TPS domain probably remains associated with CdiB while the FHA-1 domain forms an extended filament with the receptor-binding domain (RBD) at its extremity; in the secretion arrested state the C-terminus of the RBD and YP domains form a hairpin-like structure as the FHA-2, PT and CT domains are periplasmic. The YP domain is probably responsible for this arrest at the point where it re-enters the host cell periplasm. Upon binding to a target cell outer membrane receptor (heterotrimeric OmpC-OmpF for this CDI) a signal is transmitted to activate secretion. The filament elongates slightly, the rest of CdiA is secreted and the FHA-2 domain becomes stably associated with the target cell's outer membrane where it facilitates entry of the toxic CT domain into the target cell periplasm. From there the toxic CT domain is cleaved and gains access to the target cell cytoplasm via an inner membrane protein (FtsH for this CDI). The polypeptide is tRNA nuclease CdiA (Escherichia coli O6:K15:H31 (strain 536 / UPEC)).